We begin with the raw amino-acid sequence, 133 residues long: Small ribosomal subunit protein uS8 (133 aa).

It belongs to the universal ribosomal protein uS8 family. As to quaternary structure, part of the 30S ribosomal subunit. Contacts proteins S5 and S12.

In terms of biological role, one of the primary rRNA binding proteins, it binds directly to 16S rRNA central domain where it helps coordinate assembly of the platform of the 30S subunit. The polypeptide is Small ribosomal subunit protein uS8 (Prochlorococcus marinus (strain MIT 9301)).